A 377-amino-acid chain; its full sequence is Putative FBD-associated F-box protein At5g44940 (377 aa).

The 47-residue stretch at 4–50 folds into the F-box domain; that stretch reads FDYISEFPDCLLTQILLNLPTKDSVKTSVLSKRWRNLWLNVPGLRLR. Residues 297 to 346 form the FBD domain; the sequence is IDFHKVPQCLISTLEYVQIEELILKEKSGIKLVDYFLENSAVLKKLTLSF.

This Arabidopsis thaliana (Mouse-ear cress) protein is Putative FBD-associated F-box protein At5g44940.